A 320-amino-acid chain; its full sequence is ATP-dependent 6-phosphofructokinase (320 aa).

Residue glycine 12 coordinates ATP. ADP contacts are provided by residues arginine 22 to arginine 26 and arginine 55 to aspartate 60. ATP is bound by residues arginine 73–phenylalanine 74 and glycine 103–serine 106. Aspartate 104 is a Mg(2+) binding site. Residue threonine 126–aspartate 128 participates in substrate binding. Catalysis depends on aspartate 128, which acts as the Proton acceptor. Arginine 155 contacts ADP. Substrate-binding positions include arginine 163 and methionine 170–arginine 172. Residues glycine 186–glutamate 188, lysine 212, and lysine 214–histidine 216 each bind ADP. Residues glutamate 223, arginine 244, and histidine 250–arginine 253 each bind substrate.

Belongs to the phosphofructokinase type A (PFKA) family. ATP-dependent PFK group I subfamily. Prokaryotic clade 'B1' sub-subfamily. Homotetramer. Requires Mg(2+) as cofactor.

It is found in the cytoplasm. It carries out the reaction beta-D-fructose 6-phosphate + ATP = beta-D-fructose 1,6-bisphosphate + ADP + H(+). It participates in carbohydrate degradation; glycolysis; D-glyceraldehyde 3-phosphate and glycerone phosphate from D-glucose: step 3/4. Its activity is regulated as follows. Allosterically activated by ADP and other diphosphonucleosides, and allosterically inhibited by phosphoenolpyruvate. In terms of biological role, catalyzes the phosphorylation of D-fructose 6-phosphate to fructose 1,6-bisphosphate by ATP, the first committing step of glycolysis. This Escherichia fergusonii (strain ATCC 35469 / DSM 13698 / CCUG 18766 / IAM 14443 / JCM 21226 / LMG 7866 / NBRC 102419 / NCTC 12128 / CDC 0568-73) protein is ATP-dependent 6-phosphofructokinase.